The primary structure comprises 235 residues: Phosphoribosylaminoimidazole-succinocarboxamide synthase (235 aa).

This sequence belongs to the SAICAR synthetase family.

It carries out the reaction 5-amino-1-(5-phospho-D-ribosyl)imidazole-4-carboxylate + L-aspartate + ATP = (2S)-2-[5-amino-1-(5-phospho-beta-D-ribosyl)imidazole-4-carboxamido]succinate + ADP + phosphate + 2 H(+). Its pathway is purine metabolism; IMP biosynthesis via de novo pathway; 5-amino-1-(5-phospho-D-ribosyl)imidazole-4-carboxamide from 5-amino-1-(5-phospho-D-ribosyl)imidazole-4-carboxylate: step 1/2. In Exiguobacterium sibiricum (strain DSM 17290 / CCUG 55495 / CIP 109462 / JCM 13490 / 255-15), this protein is Phosphoribosylaminoimidazole-succinocarboxamide synthase.